The primary structure comprises 338 residues: Tetraacyldisaccharide 4'-kinase (338 aa).

Residue 63–70 (TVGGSGKT) coordinates ATP.

Belongs to the LpxK family.

The catalysed reaction is a lipid A disaccharide + ATP = a lipid IVA + ADP + H(+). The protein operates within glycolipid biosynthesis; lipid IV(A) biosynthesis; lipid IV(A) from (3R)-3-hydroxytetradecanoyl-[acyl-carrier-protein] and UDP-N-acetyl-alpha-D-glucosamine: step 6/6. In terms of biological role, transfers the gamma-phosphate of ATP to the 4'-position of a tetraacyldisaccharide 1-phosphate intermediate (termed DS-1-P) to form tetraacyldisaccharide 1,4'-bis-phosphate (lipid IVA). The sequence is that of Tetraacyldisaccharide 4'-kinase from Shewanella loihica (strain ATCC BAA-1088 / PV-4).